The chain runs to 522 residues: MKNYKIITLLLIISILFNIIRSNKISLKDSDSGSNGNQDIQILINDILNNCSSSESSSCFGTQWGVVADIYTPSNGEFTNIFSLNELQAFTPASNTKLFTTISIFYTFGEDFKVFTPFFTDKPFNSVSGGSSNSELDFICVKGMGDPSMSIDNLIEAAKFFSSNPTMKKVNKLLLDTSFYNIGNGVDGNIPSAWEWEDLTSTYGSIPTPLIINENTMDIYITPSNVIGGKPTASFKYSGEDKYLPVIILATTTTTSNSSTSTLNYSFKMSSQSIYITGNCDINGGIQIITVPILDPEQYFLTVFSALLEDGGVEISQTAIGSCNYTGMDYKSFEVISPELSEMLNYTLLTSNNLYAETFLRQMGTFNSAASESTPTYQAGLEYIQQTLSIPTSLYTQVDGSGLSRNNFITPKSLITVIENVYTNVGDPQHDYISYLPVASLSGTLSKRFINTPASGIVHAKTGSMTGVNSLTGVILPNGLSDDQQNSIFFSIIANNSPAQNTDIIDIIDQIVILLTKFILSS.

S94 functions as the Acyl-ester intermediate in the catalytic mechanism. The Proton acceptor role is filled by K97. S351 is an active-site residue. K461 lines the substrate pocket.

It belongs to the peptidase S13 family.

The enzyme catalyses Preferential cleavage: (Ac)2-L-Lys-D-Ala-|-D-Ala. Also transpeptidation of peptidyl-alanyl moieties that are N-acyl substituents of D-alanine.. Inhibited by penicillin G. Carboxypeptidase. The sequence is that of Penicillin-sensitive carboxypeptidase A (pscA) from Dictyostelium discoideum (Social amoeba).